The chain runs to 348 residues: Mitochondrial glycine transporter (348 aa).

Solcar repeat units lie at residues 10–94 (TKST…IREN), 130–214 (LSNT…SKQH), and 249–333 (RAAS…LIRR). A run of 6 helical transmembrane segments spans residues 16-41 (FVAGLGSGVLSAILLQPIDLLKTRVQ), 69-95 (GTLPSALRTGFGSAIYFTTLNTIRENA), 136-161 (LLAGAVARSFAGFILMPLTVLKVRYE), 189-212 (GFGATAIRDAPYAGLYVLFYEKSK), 253-279 (INFASGVFSAIICSIISNPFDAVKTRI), and 308-326 (GLALRMSRKAMSSALAWTV).

Belongs to the mitochondrial carrier (TC 2.A.29) family. SLC25A38 subfamily.

The protein localises to the mitochondrion inner membrane. The catalysed reaction is glycine(in) = glycine(out). Mitochondrial glycine transporter that imports glycine into the mitochondrial matrix. Plays an important role in providing glycine for the first enzymatic step in heme biosynthesis, the condensation of glycine with succinyl-CoA to produce 5-aminolevulinate (ALA) in the mitochondrial matrix. This chain is Mitochondrial glycine transporter (mic-13), found in Neurospora crassa (strain ATCC 24698 / 74-OR23-1A / CBS 708.71 / DSM 1257 / FGSC 987).